The sequence spans 68 residues: Phylloseptin-SP1 (68 aa).

A signal peptide spans 1–22; sequence MAFLKKSLFLVLFLGLVSLSIC. A propeptide spanning residues 23-45 is cleaved from the precursor; that stretch reads EEKERETKEEENEQEDDNREEKR. Residue Leu67 is modified to Leucine amide.

In terms of tissue distribution, expressed by the skin glands.

The protein localises to the secreted. Its function is as follows. Weak cationic amphipathic alpha-helical antimicrobial peptide with weak activity against Gram-positive and Gram-negative bacteria and fungi. Has been tested against E.coli (MIC&gt;217.69 uM), S.aureus (MIC&gt;217.69 uM), K.pneumoniae (MIC&gt;189.00 uM) and C.albicans (MIC&gt;217.69 uM). Shows a moderate hemolytic activity. This Agalychnis spurrelli (Gliding leaf frog) protein is Phylloseptin-SP1.